The primary structure comprises 105 residues: Putative pterin-4-alpha-carbinolamine dehydratase (105 aa).

The protein belongs to the pterin-4-alpha-carbinolamine dehydratase family.

The enzyme catalyses (4aS,6R)-4a-hydroxy-L-erythro-5,6,7,8-tetrahydrobiopterin = (6R)-L-erythro-6,7-dihydrobiopterin + H2O. The protein is Putative pterin-4-alpha-carbinolamine dehydratase of Sinorhizobium medicae (strain WSM419) (Ensifer medicae).